We begin with the raw amino-acid sequence, 282 residues long: Sulfur carrier protein FdhD (282 aa).

Cys-115 acts as the Cysteine persulfide intermediate in catalysis.

It belongs to the FdhD family.

It localises to the cytoplasm. Its function is as follows. Required for formate dehydrogenase (FDH) activity. Acts as a sulfur carrier protein that transfers sulfur from IscS to the molybdenum cofactor prior to its insertion into FDH. The chain is Sulfur carrier protein FdhD from Streptomyces coelicolor (strain ATCC BAA-471 / A3(2) / M145).